A 246-amino-acid chain; its full sequence is Probable transcriptional regulatory protein YebC (246 aa).

Residues 1 to 20 (MAGHSKWANTRHRKAAQDAK) form a disordered region.

It belongs to the TACO1 family.

Its subcellular location is the cytoplasm. The polypeptide is Probable transcriptional regulatory protein YebC (Salmonella typhimurium (strain LT2 / SGSC1412 / ATCC 700720)).